The chain runs to 840 residues: Lethal(3)malignant brain tumor-like protein 1 (840 aa).

Residue Ser117 is modified to Phosphoserine. A disordered region spans residues 127 to 269 (EYEDGGAPAG…WSSSQPATGE (143 aa)). Over residues 156-165 (PNQDPPEDDS) the composition is skewed to acidic residues. The span at 200-210 (VENSSGSTSAS) shows a compositional bias: polar residues. The segment covering 236-247 (AMEKQEEGKDPE) has biased composition (basic and acidic residues). Residues 250 to 266 (PTASTPESEEWSSSQPA) are compositionally biased toward polar residues. 3 MBT repeats span residues 274–374 (WSWE…LQPP), 382–481 (FSWS…LTPP), and 490–585 (FCWE…LQPP). Residues 447–454 (FDNWDDTY) form an interaction with monomethylated and dimethylated peptides region. Residues 580–605 (HPLQPPLGPREPSSASPGGCPPLSYR) are disordered. Residues 613–656 (SKYSFHHRKCPTPGCDGSGHVTGKFTAHHCLSGCPLAERNQSRL) form a CCHHC-type zinc finger. Residues Cys622, Cys627, His640, and Cys646 each coordinate Zn(2+). A disordered region spans residues 657-697 (KAELSDSEASARKKNLSGFSPRKKPRHHGRIGRPPKYRKIP). Residues 677-695 (PRKKPRHHGRIGRPPKYRK) show a composition bias toward basic residues.

As to quaternary structure, homodimer. Interacts with RB1/RB (when monomethylated at 'Lys-860'). Interacts with p53/TP53 (when monomethylated at 'Lys-382'). Interacts with CBX3, ETV6, KMT5A and VCP/p97. Post-translationally, ubiquitinated in a VCP/p97-dependent way following DNA damage, leading to its removal from DNA damage sites, promoting accessibility of H4K20me2 mark for DNA repair protein TP53BP1, which is then recruited to DNA damage sites. As to expression, widely expressed. Expression is reduced in colorectal cancer cell line SW480 and promyelocytic leukemia cell line HL-60.

The protein resides in the nucleus. In terms of biological role, polycomb group (PcG) protein that specifically recognizes and binds mono- and dimethyllysine residues on target proteins, thereby acting as a 'reader' of a network of post-translational modifications. PcG proteins maintain the transcriptionally repressive state of genes: acts as a chromatin compaction factor by recognizing and binding mono- and dimethylated histone H1b/H1-4 at 'Lys-26' (H1bK26me1 and H1bK26me2) and histone H4 at 'Lys-20' (H4K20me1 and H4K20me2), leading to condense chromatin and repress transcription. Recognizes and binds p53/TP53 monomethylated at 'Lys-382', leading to repress p53/TP53-target genes. Also recognizes and binds RB1/RB monomethylated at 'Lys-860'. Participates in the ETV6-mediated repression. Probably plays a role in cell proliferation. Overexpression induces multinucleated cells, suggesting that it is required to accomplish normal mitosis. This is Lethal(3)malignant brain tumor-like protein 1 (L3MBTL1) from Homo sapiens (Human).